Reading from the N-terminus, the 309-residue chain is Mannitol-1-phosphatase (309 aa).

Histidine 82 (tele-phosphohistidine intermediate) is an active-site residue. The active-site Proton donor/acceptor is the glutamate 166.

Belongs to the phosphoglycerate mutase family.

The catalysed reaction is D-mannitol 1-phosphate + H2O = D-mannitol + phosphate. With respect to regulation, by diethyl pyrocarbonate (DEPC). Key enzyme for mannitol biosynthesis. The sequence is that of Mannitol-1-phosphatase from Eimeria tenella (Coccidian parasite).